A 318-amino-acid polypeptide reads, in one-letter code: UDP-3-O-acylglucosamine N-acyltransferase (318 aa).

Histidine 231 functions as the Proton acceptor in the catalytic mechanism.

The protein belongs to the transferase hexapeptide repeat family. LpxD subfamily. Homotrimer.

It carries out the reaction a UDP-3-O-[(3R)-3-hydroxyacyl]-alpha-D-glucosamine + a (3R)-hydroxyacyl-[ACP] = a UDP-2-N,3-O-bis[(3R)-3-hydroxyacyl]-alpha-D-glucosamine + holo-[ACP] + H(+). It participates in bacterial outer membrane biogenesis; LPS lipid A biosynthesis. Its function is as follows. Catalyzes the N-acylation of UDP-3-O-acylglucosamine using 3-hydroxyacyl-ACP as the acyl donor. Is involved in the biosynthesis of lipid A, a phosphorylated glycolipid that anchors the lipopolysaccharide to the outer membrane of the cell. The protein is UDP-3-O-acylglucosamine N-acyltransferase of Campylobacter jejuni subsp. doylei (strain ATCC BAA-1458 / RM4099 / 269.97).